We begin with the raw amino-acid sequence, 83 residues long: Kunitz-type serine protease inhibitor TCI (83 aa).

An N-terminal signal peptide occupies residues 1–25; it reads MSSGRLLLLLGLLTLWAELTPVSGL. Positions 31-81 constitute a BPTI/Kunitz inhibitor domain; that stretch reads CELPAVSGFCKAYIPSFYYNPDASACQKFIYGGCGGNANKFKTIEECHRTC. 3 cysteine pairs are disulfide-bonded: Cys-31/Cys-81, Cys-40/Cys-64, and Cys-56/Cys-77.

As to expression, expressed by the venom gland.

It localises to the secreted. In terms of biological role, serine protease inhibitor that strongly inhibits chymotrypsin (Ki=84.6 nM) and trypsin (Ki=391 nM). The chain is Kunitz-type serine protease inhibitor TCI from Ophiophagus hannah (King cobra).